A 205-amino-acid chain; its full sequence is ATP phosphoribosyltransferase (205 aa).

It belongs to the ATP phosphoribosyltransferase family. Short subfamily. Heteromultimer composed of HisG and HisZ subunits.

It localises to the cytoplasm. The catalysed reaction is 1-(5-phospho-beta-D-ribosyl)-ATP + diphosphate = 5-phospho-alpha-D-ribose 1-diphosphate + ATP. It participates in amino-acid biosynthesis; L-histidine biosynthesis; L-histidine from 5-phospho-alpha-D-ribose 1-diphosphate: step 1/9. Its function is as follows. Catalyzes the condensation of ATP and 5-phosphoribose 1-diphosphate to form N'-(5'-phosphoribosyl)-ATP (PR-ATP). Has a crucial role in the pathway because the rate of histidine biosynthesis seems to be controlled primarily by regulation of HisG enzymatic activity. The polypeptide is ATP phosphoribosyltransferase (Nitratiruptor sp. (strain SB155-2)).